We begin with the raw amino-acid sequence, 315 residues long: Olfactory receptor 11A1 (315 aa).

Over 1 to 27 (MEIVSTGNETITEFVLLGFYDIPELHF) the chain is Extracellular. Asn8 carries N-linked (GlcNAc...) asparagine glycosylation. The chain crosses the membrane as a helical span at residues 28–48 (LFFIVFTAVYVFIIIGNMLII). The Cytoplasmic portion of the chain corresponds to 49-56 (VAVVSSQR). A helical transmembrane segment spans residues 57-77 (LHKPMYIFLANLSFLDILYTS). Residues 78–100 (AVMPKMLEGFLQEATISVAGCLL) are Extracellular-facing. Cysteines 98 and 190 form a disulfide. The helical transmembrane segment at 101-121 (QFFIFGSLATAECLLLAVMAY) threads the bilayer. The Cytoplasmic portion of the chain corresponds to 122 to 140 (DRYLAICYPLHYPLLMGPR). Residues 141–161 (RYMGLVVTTWLSGFVVDGLVV) form a helical membrane-spanning segment. Topologically, residues 162–198 (ALVAQLRFCGPNHIDQFYCDFMLFVGLACSDPRVAQV) are extracellular. Residues 199 to 218 (TTLILSVFCLTIPFGLILTS) traverse the membrane as a helical segment. At 219-238 (YARIVVAVLRVPAGASRRRA) the chain is on the cytoplasmic side. The helical transmembrane segment at 239-259 (FSTCSSHLAVVTTFYGTLMIF) threads the bilayer. At 260–272 (YVAPSAVHSQLLS) the chain is on the extracellular side. Residues 273–293 (KVFSLLYTVVTPLFNPVIYTM) form a helical membrane-spanning segment. The Cytoplasmic segment spans residues 294–315 (RNKEVHQALRKILCIKQTETLD).

It belongs to the G-protein coupled receptor 1 family.

It localises to the cell membrane. Its function is as follows. Odorant receptor. The sequence is that of Olfactory receptor 11A1 (OR11A1) from Homo sapiens (Human).